A 217-amino-acid polypeptide reads, in one-letter code: MSGGLAPSKSTVYVSNLPFSLTNNDLYRIFSKYGKVVKVTIMKDKDTRKSKGVAFILFLDKDSALNCTRAINNKQLFGRVIKASIAIDNGRAAEFIRRRNYFDKSKCYECGESGHLSYACPKNMLGEREPPKKKEKKKKKKVPEPEEEIEEVEVSEEEGEDPALDSLSQAIAFQQAKIEEEQNKWRPSTGGPSTSDDSRRPRIKKSAYFSDEEELSD.

One can recognise an RRM domain in the interval 10–88; sequence STVYVSNLPF…RVIKASIAID (79 aa). A CCHC-type zinc finger spans residues 105-122; the sequence is SKCYECGESGHLSYACPK. The tract at residues 120-217 is disordered; that stretch reads CPKNMLGERE…YFSDEEELSD (98 aa). Residues 145-163 show a composition bias toward acidic residues; the sequence is PEEEIEEVEVSEEEGEDPA. A phosphoserine mark is found at S155, S210, and S216.

As to quaternary structure, component of the U11/U12 snRNPs that are part of the U12-type spliceosome. Interacts with ZRSR1.

The protein resides in the nucleus. The protein localises to the nucleoplasm. The polypeptide is Zinc finger CCHC-type and RNA-binding motif-containing protein 1 (Zcrb1) (Rattus norvegicus (Rat)).